Consider the following 437-residue polypeptide: ATP-dependent protease ATPase subunit HslU (437 aa).

ATP contacts are provided by residues valine 18, 60–65 (GCGKTE), aspartate 250, glutamate 315, and arginine 387.

It belongs to the ClpX chaperone family. HslU subfamily. In terms of assembly, a double ring-shaped homohexamer of HslV is capped on each side by a ring-shaped HslU homohexamer. The assembly of the HslU/HslV complex is dependent on binding of ATP.

Its subcellular location is the cytoplasm. In terms of biological role, ATPase subunit of a proteasome-like degradation complex; this subunit has chaperone activity. The binding of ATP and its subsequent hydrolysis by HslU are essential for unfolding of protein substrates subsequently hydrolyzed by HslV. HslU recognizes the N-terminal part of its protein substrates and unfolds these before they are guided to HslV for hydrolysis. The sequence is that of ATP-dependent protease ATPase subunit HslU from Methylorubrum populi (strain ATCC BAA-705 / NCIMB 13946 / BJ001) (Methylobacterium populi).